The following is a 119-amino-acid chain: Large ribosomal subunit protein uL18 (119 aa).

It belongs to the universal ribosomal protein uL18 family. In terms of assembly, part of the 50S ribosomal subunit; part of the 5S rRNA/L5/L18/L25 subcomplex. Contacts the 5S and 23S rRNAs.

Its function is as follows. This is one of the proteins that bind and probably mediate the attachment of the 5S RNA into the large ribosomal subunit, where it forms part of the central protuberance. This chain is Large ribosomal subunit protein uL18, found in Clostridium botulinum (strain Alaska E43 / Type E3).